We begin with the raw amino-acid sequence, 626 residues long: Elongation factor 4 (626 aa).

One can recognise a tr-type G domain in the interval 14-195 (SLIRNFCIIA…RIVVDVPAPT (182 aa)). GTP contacts are provided by residues 26 to 31 (DHGKST) and 142 to 145 (NKID). The disordered stretch occupies residues 603–626 (LSTGEGGNDRDTKDKIRAAQKSEG). Residues 609–626 (GNDRDTKDKIRAAQKSEG) show a composition bias toward basic and acidic residues.

It belongs to the TRAFAC class translation factor GTPase superfamily. Classic translation factor GTPase family. LepA subfamily.

The protein resides in the cell membrane. The enzyme catalyses GTP + H2O = GDP + phosphate + H(+). Its function is as follows. Required for accurate and efficient protein synthesis under certain stress conditions. May act as a fidelity factor of the translation reaction, by catalyzing a one-codon backward translocation of tRNAs on improperly translocated ribosomes. Back-translocation proceeds from a post-translocation (POST) complex to a pre-translocation (PRE) complex, thus giving elongation factor G a second chance to translocate the tRNAs correctly. Binds to ribosomes in a GTP-dependent manner. This chain is Elongation factor 4, found in Bifidobacterium animalis subsp. lactis (strain AD011).